A 231-amino-acid polypeptide reads, in one-letter code: Demethylmenaquinone methyltransferase (231 aa).

S-adenosyl-L-methionine contacts are provided by residues Thr-62, Asp-80, Asp-102–Ala-103, and Ser-119.

The protein belongs to the class I-like SAM-binding methyltransferase superfamily. MenG/UbiE family.

It carries out the reaction a 2-demethylmenaquinol + S-adenosyl-L-methionine = a menaquinol + S-adenosyl-L-homocysteine + H(+). The protein operates within quinol/quinone metabolism; menaquinone biosynthesis; menaquinol from 1,4-dihydroxy-2-naphthoate: step 2/2. Methyltransferase required for the conversion of demethylmenaquinol (DMKH2) to menaquinol (MKH2). The protein is Demethylmenaquinone methyltransferase of Streptomyces avermitilis (strain ATCC 31267 / DSM 46492 / JCM 5070 / NBRC 14893 / NCIMB 12804 / NRRL 8165 / MA-4680).